A 395-amino-acid polypeptide reads, in one-letter code: Acid ceramidase (395 aa).

The signal sequence occupies residues M1–V20. Residues C31 and C340 are joined by a disulfide bond. C143 serves as the catalytic Nucleophile. N-linked (GlcNAc...) asparagine glycans are attached at residues N195, N259, N286, and N342. A disulfide bridge links C388 with C392.

This sequence belongs to the acid ceramidase family. Heterodimer; disulfide-linked. The heterodimer is composed of the disulfide-linked alpha and beta chains produced by autocatalytic cleavage of the precursor. N-glycosylated. In terms of processing, proteolytically cleaved into two chains alpha and beta that remain associated via a disulfide bond. Cleavage gives rise to a conformation change that activates the enzyme. The same catalytic Cys residue mediates the autoproteolytic cleavage and subsequent hydrolysis of lipid substrates. The beta chain may undergo an additional C-terminal processing.

It is found in the lysosome. It localises to the secreted. The catalysed reaction is an N-acylsphing-4-enine + H2O = sphing-4-enine + a fatty acid. It catalyses the reaction N-dodecanoylsphing-4-enine + H2O = dodecanoate + sphing-4-enine. It carries out the reaction N-tetradecanoylsphing-4-enine + H2O = tetradecanoate + sphing-4-enine. The enzyme catalyses N-hexadecanoylsphing-4-enine + H2O = sphing-4-enine + hexadecanoate. The catalysed reaction is N-octadecanoylsphing-4-enine + H2O = sphing-4-enine + octadecanoate. It catalyses the reaction N-dodecanoyl-(4R)-hydroxysphinganine + H2O = (4R)-hydroxysphinganine + dodecanoate. It carries out the reaction N-(dodecanoyl)-sphinganine + H2O = dodecanoate + sphinganine. The enzyme catalyses N-(acetyl)-sphing-4-enine + H2O = sphing-4-enine + acetate. The catalysed reaction is N-(hexanoyl)sphing-4-enine + H2O = hexanoate + sphing-4-enine. It catalyses the reaction N-octanoylsphing-4-enine + H2O = octanoate + sphing-4-enine. It carries out the reaction N-(9Z-octadecenoyl)-sphing-4-enine + H2O = sphing-4-enine + (9Z)-octadecenoate. The enzyme catalyses N-dodecanoylethanolamine + H2O = dodecanoate + ethanolamine. It participates in lipid metabolism; sphingolipid metabolism. Its function is as follows. Lysosomal ceramidase that hydrolyzes sphingolipid ceramides into sphingosine and free fatty acids at acidic pH. Ceramides, sphingosine, and its phosphorylated form sphingosine-1-phosphate are bioactive lipids that mediate cellular signaling pathways regulating several biological processes including cell proliferation, apoptosis and differentiation. Has a higher catalytic efficiency towards C12-ceramides versus other ceramides. Also catalyzes the reverse reaction allowing the synthesis of ceramides from fatty acids and sphingosine. For the reverse synthetic reaction, the natural sphingosine D-erythro isomer is more efficiently utilized as a substrate compared to D-erythro-dihydrosphingosine and D-erythro-phytosphingosine, while the fatty acids with chain lengths of 12 or 14 carbons are the most efficiently used. Also has an N-acylethanolamine hydrolase activity. By regulating the levels of ceramides, sphingosine and sphingosine-1-phosphate in the epidermis, mediates the calcium-induced differentiation of epidermal keratinocytes. Also indirectly regulates tumor necrosis factor/TNF-induced apoptosis. By regulating the intracellular balance between ceramides and sphingosine, in adrenocortical cells, probably also acts as a regulator of steroidogenesis. This is Acid ceramidase from Bos taurus (Bovine).